A 54-amino-acid polypeptide reads, in one-letter code: Large ribosomal subunit protein bL33A (54 aa).

The protein belongs to the bacterial ribosomal protein bL33 family.

In Myxococcus xanthus (strain DK1622), this protein is Large ribosomal subunit protein bL33A.